We begin with the raw amino-acid sequence, 186 residues long: Protein FAM9B (186 aa).

The tract at residues 1–93 (MAAWGKKHAG…KHALRKKQLK (93 aa)) is disordered. 2 stretches are compositionally biased toward basic and acidic residues: residues 10–27 (GKDPVRDECEERNRFTET) and 34–58 (DEHGEREPFAETDEHTGANTKKPED). Residues 66 to 93 (KRKRMKMDKTCSKTKNKSKHALRKKQLK) show a composition bias toward basic residues.

It belongs to the XLR/SYCP3 family. Expressed in testis and ovary (at protein level).

Its subcellular location is the nucleus. It localises to the cytoplasm. The protein resides in the chromosome. Functionally, may play a role in meiosis. This is Protein FAM9B from Homo sapiens (Human).